The sequence spans 452 residues: Tubulin beta-2 chain (452 aa).

The GTP site is built by Gln11, Glu74, Ser143, Val147, Thr148, Gly149, Asn209, and Asn231. Position 74 (Glu74) interacts with Mg(2+). The disordered stretch occupies residues 431–452 (QEATADDEAEFEEEGEVEGEYD). The segment covering 434 to 452 (TADDEAEFEEEGEVEGEYD) has biased composition (acidic residues).

The protein belongs to the tubulin family. As to quaternary structure, dimer of alpha and beta chains. A typical microtubule is a hollow water-filled tube with an outer diameter of 25 nm and an inner diameter of 15 nM. Alpha-beta heterodimers associate head-to-tail to form protofilaments running lengthwise along the microtubule wall with the beta-tubulin subunit facing the microtubule plus end conferring a structural polarity. Microtubules usually have 13 protofilaments but different protofilament numbers can be found in some organisms and specialized cells. Requires Mg(2+) as cofactor.

Its subcellular location is the cytoplasm. The protein localises to the cytoskeleton. Functionally, tubulin is the major constituent of microtubules, a cylinder consisting of laterally associated linear protofilaments composed of alpha- and beta-tubulin heterodimers. Microtubules grow by the addition of GTP-tubulin dimers to the microtubule end, where a stabilizing cap forms. Below the cap, tubulin dimers are in GDP-bound state, owing to GTPase activity of alpha-tubulin. In Homarus americanus (American lobster), this protein is Tubulin beta-2 chain.